The primary structure comprises 540 residues: 2-isopropylmalate synthase (540 aa).

In terms of domain architecture, Pyruvate carboxyltransferase spans 8–271; sequence VLIFDTTLRD…NPFFGRESDS (264 aa). D17, H208, H210, and N244 together coordinate Mn(2+). Residues 408–540 form a regulatory domain region; sequence QLRLVQVSCG…AVLADRRPGI (133 aa).

It belongs to the alpha-IPM synthase/homocitrate synthase family. LeuA type 1 subfamily. As to quaternary structure, homodimer. It depends on Mn(2+) as a cofactor.

It localises to the cytoplasm. It catalyses the reaction 3-methyl-2-oxobutanoate + acetyl-CoA + H2O = (2S)-2-isopropylmalate + CoA + H(+). Its pathway is amino-acid biosynthesis; L-leucine biosynthesis; L-leucine from 3-methyl-2-oxobutanoate: step 1/4. In terms of biological role, catalyzes the condensation of the acetyl group of acetyl-CoA with 3-methyl-2-oxobutanoate (2-ketoisovalerate) to form 3-carboxy-3-hydroxy-4-methylpentanoate (2-isopropylmalate). The polypeptide is 2-isopropylmalate synthase (Prochlorococcus marinus (strain MIT 9303)).